The following is a 237-amino-acid chain: Glutathione S-transferase psoE (237 aa).

The 78-residue stretch at 2-79 (VFGTLYTFPG…YITSQNEQTT (78 aa)) folds into the GST N-terminal domain. Glutathione contacts are provided by arginine 37, lysine 49, valine 50, glutamate 63, cysteine 64, and asparagine 99. Lysine 49 contacts substrate. The 139-residue stretch at 84–222 (DKKEYAEIIK…NNPPEKKPET (139 aa)) folds into the GST C-terminal domain. Position 108 (glutamine 108) interacts with substrate. A compositionally biased stretch (basic and acidic residues) spans 208–222 (EPKLTNNPPEKKPET). Positions 208 to 237 (EPKLTNNPPEKKPETVPKNGAAVAIEATQA) are disordered.

It belongs to the GST superfamily. Glutathione serves as cofactor.

It participates in secondary metabolite biosynthesis. In terms of biological role, glutathione S-transferase; part of the gene cluster that mediates the biosynthesis of pseurotin A, a competitive inhibitor of chitin synthase and an inducer of nerve-cell proliferation. The PKS-NRPS hybrid synthetase psoA is responsible for the biosynthesis of azaspirene, one of the first intermediates having the 1-oxa-7-azaspiro[4,4]-non-2-ene-4,6-dione core of pseurotin, via condensation of one acetyl-CoA, 4 malonyl-CoA, and a L-phenylalanine molecule. The dual-functional monooxygenase/methyltransferase psoF seems to be involved in the addition of the C3 methyl group onto the pseurotin scaffold. Azaspirene is then converted to synerazol through 4 steps including oxidation of C17 by the cytochrome P450 monooxygenase psoD, O-methylation of the hydroxy group of C8 by the methyltransferase psoC, and the trans-to-cis isomerization of the C13 olefin by the glutathione S-transferase psoE. The fourth step of synerazol production is performed by the dual-functional monooxygenase/methyltransferase psoF which seems to catalyze the epoxidation of the intermediate deepoxy-synerazol. Synerazol can be attacked by a water molecule nonenzymatically at two different positions to yield two diol products, pseurotin A and pseurotin D. This Aspergillus fumigatus (strain ATCC MYA-4609 / CBS 101355 / FGSC A1100 / Af293) (Neosartorya fumigata) protein is Glutathione S-transferase psoE.